We begin with the raw amino-acid sequence, 778 residues long: Degenerin deg-1 (778 aa).

The Cytoplasmic portion of the chain corresponds to 1 to 82 (MSNHHSKTKK…IARNSFSKLM (82 aa)). Residues 83 to 103 (WGLIIFSFLLMFAYQASKLIF) form a helical membrane-spanning segment. Residues 104-711 (KFSAHEKITD…LVNLIADFGG (608 aa)) lie on the Extracellular side of the membrane. Over residues 154-165 (NAKTHSKSEGEK) the composition is skewed to basic and acidic residues. Disordered stretches follow at residues 154 to 180 (NAKTHSKSEGEKKKPKVSRKQHSDASQ) and 201 to 220 (SNKTLQSQNKSGRRRSQRSI). N-linked (GlcNAc...) asparagine glycans are attached at residues N202, N209, N272, and N342. The segment covering 346–369 (TSTTTTTTTTPPPTTTSTTTTTTT) has biased composition (low complexity). The disordered stretch occupies residues 346 to 380 (TSTTTTTTTTPPPTTTSTTTTTTTTPPPTTTARPN). Residues N473, N492, and N606 are each glycosylated (N-linked (GlcNAc...) asparagine). A helical membrane pass occupies residues 712–732 (HLGLWLGFSVITVMEVCVLLV). The Cytoplasmic portion of the chain corresponds to 733–778 (DMISLFFKSRHEEKLLRQSTKRKDVPEDKRQITVGSGRKSDAFVSI).

It belongs to the amiloride-sensitive sodium channel (TC 1.A.6) family.

Its subcellular location is the membrane. Functionally, probable sodium channel subunit. Required by a subset of neurons. In Caenorhabditis elegans, this protein is Degenerin deg-1.